Reading from the N-terminus, the 447-residue chain is tRNA modification GTPase MnmE (447 aa).

(6S)-5-formyl-5,6,7,8-tetrahydrofolate-binding residues include R24, E81, and K120. One can recognise a TrmE-type G domain in the interval 216-371; the sequence is GLNVVIAGKP…LRKELSDIAG (156 aa). Residue N226 participates in K(+) binding. GTP is bound by residues 226 to 231, 245 to 251, and 270 to 273; these read NAGKSS, TDIAGTT, and DTAG. S230 lines the Mg(2+) pocket. Positions 245, 247, and 250 each coordinate K(+). T251 is a binding site for Mg(2+). K447 is a (6S)-5-formyl-5,6,7,8-tetrahydrofolate binding site.

The protein belongs to the TRAFAC class TrmE-Era-EngA-EngB-Septin-like GTPase superfamily. TrmE GTPase family. Homodimer. Heterotetramer of two MnmE and two MnmG subunits. K(+) serves as cofactor.

Its subcellular location is the cytoplasm. Functionally, exhibits a very high intrinsic GTPase hydrolysis rate. Involved in the addition of a carboxymethylaminomethyl (cmnm) group at the wobble position (U34) of certain tRNAs, forming tRNA-cmnm(5)s(2)U34. The protein is tRNA modification GTPase MnmE of Ruthia magnifica subsp. Calyptogena magnifica.